Consider the following 154-residue polypeptide: Superoxide dismutase [Cu-Zn] (154 aa).

His-47, His-49, and His-64 together coordinate Cu cation. A disulfide bridge connects residues Cys-58 and Cys-147. Residues His-64, His-72, His-81, and Asp-84 each coordinate Zn(2+). His-121 is a Cu cation binding site. Substrate is bound at residue Arg-144.

The protein belongs to the Cu-Zn superoxide dismutase family. As to quaternary structure, homodimer. The cofactor is Cu cation. Zn(2+) serves as cofactor.

Its subcellular location is the cytoplasm. It carries out the reaction 2 superoxide + 2 H(+) = H2O2 + O2. Functionally, destroys radicals which are normally produced within the cells and which are toxic to biological systems. This is Superoxide dismutase [Cu-Zn] (SOD1) from Candida albicans (Yeast).